We begin with the raw amino-acid sequence, 727 residues long: MGRRAKMVEKVKTLMEKHDQIRNMGICAHIDHGKTTLSDNLLAGAGMISKELAGDQLALDFDEEEAARGITIYAANVSMVHEYGGKEYLINLIDTPGHVDFGGDVTRAMRAIDGAVVVCCAVEGVMPQTETVLRQALKEKVKPVLFINKVDRLINELKLTPEELQGRFMKIIAEVNKLIEKMAPEEFKKEWLCDVVTGKVAFGSAYNNWAISVPYMQRSGISFKDIIDYCEQEKQGELADKAPLHEVILDMAIKHLPNPLQAQKYRIPNIWKGDAESEIGKSMVACDPNGPLAGVVTKIIVDKHAGAISACRLFSGRIKQGDDLYLVGSKQKARAQQVSIFMGAERVQVPSISAGNICALTGLREATAGETVCSPSEILEPGFESLTHTSEPVITVAIEAKNTKDLPKLIEILRQIAREDNTVRVEINEETGEHLISGMGELHIEVITNTKIGRDGGIEVDVGEPIVVYRETITGTSPEIEGKSPNKHNKLYMIAEPMDESVYAAYVEGKIHDEDYKKKTTADGEARLVEAGLDKDQAKKVMSIYNGNMIVNMTRGIVQLDEARELIIEGFKEGVRNGPLAAEKVQGVKIRLVDATFHEDAIHRGPAQIIPAVRFGVRDAVAQAKPVLLEPMQSVYINTPQDYMGDGMKEINNRRGQILDMEQEGDMSIIKSSVPVAEMFGFAGAIRGATQGRCLWSVEFSGFERVPAELQPKIAKQIRDRKGLKSE.

One can recognise a tr-type G domain in the interval 19 to 260 (DQIRNMGICA…MAIKHLPNPL (242 aa)). GTP is bound by residues 28-35 (AHIDHGKT), 94-98 (DTPGH), and 148-151 (NKVD). Position 603 is a diphthamide (H603).

This sequence belongs to the TRAFAC class translation factor GTPase superfamily. Classic translation factor GTPase family. EF-G/EF-2 subfamily.

It is found in the cytoplasm. Functionally, catalyzes the GTP-dependent ribosomal translocation step during translation elongation. During this step, the ribosome changes from the pre-translocational (PRE) to the post-translocational (POST) state as the newly formed A-site-bound peptidyl-tRNA and P-site-bound deacylated tRNA move to the P and E sites, respectively. Catalyzes the coordinated movement of the two tRNA molecules, the mRNA and conformational changes in the ribosome. The chain is Elongation factor 2 from Methanococcus maripaludis (strain C7 / ATCC BAA-1331).